The chain runs to 355 residues: 3-isopropylmalate dehydrogenase (355 aa).

R90, R100, R128, and D222 together coordinate substrate. Mg(2+) contacts are provided by D222, D246, and D250. 280–292 (GSAPDIAGKGIAN) lines the NAD(+) pocket.

It belongs to the isocitrate and isopropylmalate dehydrogenases family. LeuB type 1 subfamily. In terms of assembly, homodimer. Requires Mg(2+) as cofactor. It depends on Mn(2+) as a cofactor.

The protein resides in the cytoplasm. The catalysed reaction is (2R,3S)-3-isopropylmalate + NAD(+) = 4-methyl-2-oxopentanoate + CO2 + NADH. The protein operates within amino-acid biosynthesis; L-leucine biosynthesis; L-leucine from 3-methyl-2-oxobutanoate: step 3/4. Catalyzes the oxidation of 3-carboxy-2-hydroxy-4-methylpentanoate (3-isopropylmalate) to 3-carboxy-4-methyl-2-oxopentanoate. The product decarboxylates to 4-methyl-2 oxopentanoate. The protein is 3-isopropylmalate dehydrogenase of Burkholderia multivorans (strain ATCC 17616 / 249).